We begin with the raw amino-acid sequence, 147 residues long: 3-dehydroquinate dehydratase 2 (147 aa).

Tyr23 (proton acceptor) is an active-site residue. Substrate contacts are provided by Asn74, His80, and Asp87. The active-site Proton donor is the His100. Residues 101-102 (IS) and Arg111 each bind substrate.

The protein belongs to the type-II 3-dehydroquinase family. Homododecamer.

It carries out the reaction 3-dehydroquinate = 3-dehydroshikimate + H2O. The protein operates within metabolic intermediate biosynthesis; chorismate biosynthesis; chorismate from D-erythrose 4-phosphate and phosphoenolpyruvate: step 3/7. In terms of biological role, catalyzes a trans-dehydration via an enolate intermediate. The sequence is that of 3-dehydroquinate dehydratase 2 (aroQ2) from Agrobacterium fabrum (strain C58 / ATCC 33970) (Agrobacterium tumefaciens (strain C58)).